The following is a 213-amino-acid chain: ER lumen protein-retaining receptor erd-2.2 (213 aa).

Topologically, residues 1–2 (MN) are lumenal. A helical transmembrane segment spans residues 3–21 (IFRISADMSHLLAIIILLL). Over 22–35 (KIWKSRSCSGISAR) the chain is Cytoplasmic. A helical transmembrane segment spans residues 36-53 (SQILFALVFTARYLDLFS). The Lumenal segment spans residues 54-61 (TYISLYNT). Residues 62-80 (TMKITFLAATYATVYLMFF) traverse the membrane as a helical segment. Residues 81-96 (KFRSTYMRESDTFRVE) lie on the Cytoplasmic side of the membrane. The helical transmembrane segment at 97–110 (LLIVPAAILALLIN) threads the bilayer. At 111-117 (HDFAPFE) the chain is on the lumenal side. The chain crosses the membrane as a helical span at residues 118–137 (LLWTFSIYLEAVAILPQLFL). Residues 138–149 (LQSTGSAEVITA) lie on the Cytoplasmic side of the membrane. The helical transmembrane segment at 150–168 (HYLFALGSYRALYIFNWIY) threads the bilayer. At 169 to 178 (RYYTEDYFDP) the chain is on the lumenal side. A helical membrane pass occupies residues 179–199 (IVVVAGIVQTVLYADFFYLYV). Residues 200–213 (TRVVQTRKGMELPI) are Cytoplasmic-facing.

The protein belongs to the ERD2 family.

It localises to the endoplasmic reticulum membrane. Its function is as follows. Required for the retention of luminal endoplasmic reticulum proteins. Determines the specificity of the luminal ER protein retention system. Also required for normal vesicular traffic through the Golgi. This Caenorhabditis elegans protein is ER lumen protein-retaining receptor erd-2.2.